A 307-amino-acid chain; its full sequence is UDP-3-O-acyl-N-acetylglucosamine deacetylase (307 aa).

His-78, His-241, and Asp-245 together coordinate Zn(2+). His-268 (proton donor) is an active-site residue.

Belongs to the LpxC family. The cofactor is Zn(2+).

The catalysed reaction is a UDP-3-O-[(3R)-3-hydroxyacyl]-N-acetyl-alpha-D-glucosamine + H2O = a UDP-3-O-[(3R)-3-hydroxyacyl]-alpha-D-glucosamine + acetate. Its pathway is glycolipid biosynthesis; lipid IV(A) biosynthesis; lipid IV(A) from (3R)-3-hydroxytetradecanoyl-[acyl-carrier-protein] and UDP-N-acetyl-alpha-D-glucosamine: step 2/6. Catalyzes the hydrolysis of UDP-3-O-myristoyl-N-acetylglucosamine to form UDP-3-O-myristoylglucosamine and acetate, the committed step in lipid A biosynthesis. The polypeptide is UDP-3-O-acyl-N-acetylglucosamine deacetylase (Paracidovorax citrulli (strain AAC00-1) (Acidovorax citrulli)).